The sequence spans 337 residues: Vacuolar protein sorting-associated protein 26B-A (337 aa).

Residues 313–337 (RFEGTSHPETRPQHSGAAAVEQEHE) are disordered.

Belongs to the VPS26 family. In terms of assembly, component of the heterotrimeric retromer cargo-selective complex (CSC) which is believed to associate with variable sorting nexins to form functionally distinct retromer complex variants.

The protein resides in the cytoplasm. It localises to the endosome membrane. Its subcellular location is the early endosome. Functionally, acts as a component of the retromer cargo-selective complex (CSC). The CSC is believed to be the core functional component of retromer or respective retromer complex variants acting to prevent missorting of selected transmembrane cargo proteins into the lysosomal degradation pathway. Retromer mediates retrograde transport of cargo proteins from endosomes to the trans-Golgi network (TGN). The chain is Vacuolar protein sorting-associated protein 26B-A (vps26b-a) from Xenopus laevis (African clawed frog).